The following is a 377-amino-acid chain: tRNA/tmRNA (uracil-C(5))-methyltransferase (377 aa).

S-adenosyl-L-methionine contacts are provided by Q199, Y227, N232, E248, and D308. The active-site Nucleophile is the C333. The active-site Proton acceptor is E367.

It belongs to the class I-like SAM-binding methyltransferase superfamily. RNA M5U methyltransferase family. TrmA subfamily.

The enzyme catalyses uridine(54) in tRNA + S-adenosyl-L-methionine = 5-methyluridine(54) in tRNA + S-adenosyl-L-homocysteine + H(+). The catalysed reaction is uridine(341) in tmRNA + S-adenosyl-L-methionine = 5-methyluridine(341) in tmRNA + S-adenosyl-L-homocysteine + H(+). Dual-specificity methyltransferase that catalyzes the formation of 5-methyluridine at position 54 (m5U54) in all tRNAs, and that of position 341 (m5U341) in tmRNA (transfer-mRNA). In Aeromonas hydrophila subsp. hydrophila (strain ATCC 7966 / DSM 30187 / BCRC 13018 / CCUG 14551 / JCM 1027 / KCTC 2358 / NCIMB 9240 / NCTC 8049), this protein is tRNA/tmRNA (uracil-C(5))-methyltransferase.